The following is a 416-amino-acid chain: Glutamyl-tRNA reductase (416 aa).

Substrate is bound by residues 49-52 (TCNR), Ser105, 110-112 (EPQ), and Gln116. Residue Cys50 is the Nucleophile of the active site. NADP(+) is bound at residue 185 to 190 (GAGETI).

Belongs to the glutamyl-tRNA reductase family. Homodimer.

It carries out the reaction (S)-4-amino-5-oxopentanoate + tRNA(Glu) + NADP(+) = L-glutamyl-tRNA(Glu) + NADPH + H(+). It functions in the pathway porphyrin-containing compound metabolism; protoporphyrin-IX biosynthesis; 5-aminolevulinate from L-glutamyl-tRNA(Glu): step 1/2. In terms of biological role, catalyzes the NADPH-dependent reduction of glutamyl-tRNA(Glu) to glutamate 1-semialdehyde (GSA). The protein is Glutamyl-tRNA reductase of Shewanella sp. (strain MR-7).